The chain runs to 610 residues: Protein arginine N-methyltransferase 5 (610 aa).

The SAM-dependent MTase PRMT-type domain maps to 284–587; the sequence is LEIPLQPLCD…VDATKVWYEW (304 aa). Y300 lines the S-adenosyl-L-methionine pocket. Position 303 (F303) interacts with a protein. Residues 309-310, E368, and 396-397 each bind S-adenosyl-L-methionine; these read KY and DM. E412 and E421 together coordinate a protein. Catalysis depends on proton donor/acceptor residues E412 and E421. Residues 470-610 are interaction with vls; that stretch reads AFDYGYVSLL…TRGTGYNMRL (141 aa).

Belongs to the class I-like SAM-binding methyltransferase superfamily. Protein arginine N-methyltransferase family. In terms of assembly, interacts with vls. In terms of tissue distribution, expressed only in ovaries.

The protein localises to the cytoplasm. In terms of biological role, arginine methyltransferase that can both catalyze the formation of omega-N monomethylarginine (MMA) and symmetrical dimethylarginine (sDMA). Specifically mediates the symmetrical dimethylation of arginine residues in the small nuclear ribonucleoproteins SmD1 and SmD3. Required for arginine symmetrical dimethylation of piwi family proteins, piwi, aub and AGO3, during germline development. Required during oogenesis for pole cell formation in the pathway controlled by oskar (osk) and for abdominal segments during early embryogenesis. Involved in nanos (nos) and germ cell mRNAs localization. The protein is Protein arginine N-methyltransferase 5 of Drosophila melanogaster (Fruit fly).